The sequence spans 266 residues: Undecaprenyl-diphosphatase (266 aa).

A run of 8 helical transmembrane segments spans residues 1 to 21 (MMSWLTIGVILGLVQGITEFL), 43 to 63 (ASVFEVAVQLGSIMAVVVIYW), 81 to 101 (LYGIWLLFLTTLPPGIIGFLF), 107 to 127 (TLFTIPSVIAALTTGSIFMLI), 145 to 165 (LTPKTALGIGFFECLALWPGF), 183 to 203 (HLAAEYSFIAAVPVMFAATGY), 219 to 239 (LFITGMICAFLAAWITIKVFI), and 245 to 265 (ISLRPFAYYRLLLAFIVYLCI).

The protein belongs to the UppP family.

Its subcellular location is the cell membrane. The enzyme catalyses di-trans,octa-cis-undecaprenyl diphosphate + H2O = di-trans,octa-cis-undecaprenyl phosphate + phosphate + H(+). Its function is as follows. Catalyzes the dephosphorylation of undecaprenyl diphosphate (UPP). Confers resistance to bacitracin. The polypeptide is Undecaprenyl-diphosphatase (Lawsonia intracellularis (strain PHE/MN1-00)).